The chain runs to 552 residues: HTH-type transcriptional regulator SgrR (552 aa).

Positions 1-116 (MPSARLQQQF…LVSHLGRSFR (116 aa)) constitute an HTH marR-type domain. Positions 26 to 49 (LNELAALLSCSRRHMRTLLNTMQD) form a DNA-binding region, H-T-H motif. Residues 163–492 (ELEADIAHHW…IDWQVDAARW (330 aa)) form a solute-binding region.

Activates the small RNA gene sgrS under glucose-phosphate stress conditions as well as yfdZ. Represses its own transcription under both stress and non-stress conditions. Might act as a sensor of the intracellular accumulation of phosphoglucose by binding these molecules in its C-terminal solute-binding domain. This is HTH-type transcriptional regulator SgrR from Escherichia coli O157:H7.